Here is a 452-residue protein sequence, read N- to C-terminus: La-related protein 1B (452 aa).

The span at 1 to 22 (MATTASSAANSASRFSIDSSIS) shows a compositional bias: low complexity. The tract at residues 1 to 251 (MATTASSAAN…GFSHRNYSGR (251 aa)) is disordered. At alanine 2 the chain carries N-acetylalanine. The span at 44–68 (LSLSQDDPFSAPSVSPPTGNNSSDY) shows a compositional bias: polar residues. Composition is skewed to low complexity over residues 99–117 (SWPALSLSARSSSIKSPSL), 136–163 (ATSNTSTNANAGSSVSATSSENSAVNNS), 171–185 (NNNTSSSSTSSNVSN), and 206–223 (SGNFRNSQRNRNSSSYPR). Positions 225-236 (EGLHHGNRRNYE) are enriched in basic and acidic residues. A compositionally biased stretch (polar residues) spans 237–247 (HGNQSGFSHRN). Residues 328 to 417 (RNFDAILYNK…RGDWDKYLLP (90 aa)) enclose the HTH La-type RNA-binding domain. Residues 419-452 (EPSRSGPAAGASNNASLVSQIESMTLSERSREGV) are disordered. Low complexity predominate over residues 422 to 434 (RSGPAAGASNNAS). Residues 435–445 (LVSQIESMTLS) show a composition bias toward polar residues.

Belongs to the LARP family.

The protein localises to the cytoplasm. Promotes leaf senescence. This chain is La-related protein 1B (LARP1B), found in Arabidopsis thaliana (Mouse-ear cress).